The chain runs to 362 residues: MMLPSPVTSTPFSVKDILNLEQQRHFHGAHLQAELEQHFHSAPCMLATAEGTQFSDAGEEDEEEEGEKLSYLNSLAAAEGHGDSGLCPQSYVHTVLRDACSGPKEQEEEVVSERSQKSCQLKKSLEAAGDCKTSEDGERPKPRSRRKPRVLFSQAQVFELERRFKQQRYLSAPEREHLASSLKLTSTQVKIWFQNRRYKCKRQRQDKSLELGTHAPPPPPRRVAVPVLVRDGKPCVTPSAQTYGSPYGVGAGAYSYNSFPAYGYGNSAAAAAAAAAAAAAAAAYSGSYGCAYPTGGGGGGGGTASAATTAMQPACSATGGGSFVNVSNLGGFGSGGGAQPLHQGAAAGSACTQGTLQGIRAW.

Disordered stretches follow at residues 126 to 149 (EAAGDCKTSEDGERPKPRSRRKPR) and 203 to 222 (QRQDKSLELGTHAPPPPPRR). The span at 132–141 (KTSEDGERPK) shows a compositional bias: basic and acidic residues. A DNA-binding region (homeobox) is located at residues 145 to 204 (RRKPRVLFSQAQVFELERRFKQQRYLSAPEREHLASSLKLTSTQVKIWFQNRRYKCKRQR).

Belongs to the NK-2 homeobox family. Expressed in spleen and intestine. Also expressed in salivary gland and tongue.

It localises to the nucleus. Its function is as follows. Transcriptional regulator essential for normal development and functions of the small intestine and spleen. Activates directly MADCAM1 expression. Required for homing of lymphocytes in spleen and mucosa-associated lymphoid tissue. May have a role during pharyngeal organogenesis. The chain is Homeobox protein Nkx-2.3 (Nkx2-3) from Mus musculus (Mouse).